A 758-amino-acid polypeptide reads, in one-letter code: POU domain, class 2, transcription factor 1 (758 aa).

Composition is skewed to polar residues over residues 1-10 (MKLHSSSKIQ), 19-30 (RMNNPSETSKSP), and 275-285 (VQQLPQSQTTP). Disordered regions lie at residues 1-43 (MKLH…QTNG), 271-296 (AATP…LEEP), 377-398 (TNQS…RRKK), 450-472 (EKRI…LFSS), and 534-573 (SVLT…MTSS). Residues 294–368 (EEPSDLEELE…LLEKWLNDAE (75 aa)) form the POU-specific domain. Residues 395-454 (RRKKRTSIETNIRVALEKSFLENQKPTSEEITMIADQLNMEKEVIRVWFCNRRQKEKRIN) constitute a DNA-binding region (homeobox). Residues 455–472 (PPSSGGSSSSPIKSLFSS) show a composition bias toward low complexity.

This sequence belongs to the POU transcription factor family. Class-2 subfamily. As to expression, expressed in oocytes (at protein level). Expressed in the tadpole brain (at protein level).

The protein localises to the cytoplasm. The protein resides in the nucleus. Functionally, transcription factor that binds to the octamer motif (5'-ATTTGCAT-3') and activates the promoters of the genes of some small nuclear RNAs (snRNA) and histone H2B. In vitro does not bind to variant octamer sequences, such as the H2B octamer 5'-GTTTGCAT-3', although binding has been observed in vivo during early embryogenesis, suggesting that interactions between pou2f1 and other factors might be required for octamer-dependent H2B transcription. Acts downstream of Notch signaling during radial glia formation. May be important for gastrulation, possibly through the regulation of an FGF-type signaling pathway. The sequence is that of POU domain, class 2, transcription factor 1 (pou2f1) from Xenopus laevis (African clawed frog).